Consider the following 484-residue polypeptide: UDP-N-acetylmuramate--L-alanine ligase (484 aa).

Position 128–134 (128–134) interacts with ATP; that stretch reads GTHGKTT.

This sequence belongs to the MurCDEF family.

It is found in the cytoplasm. It carries out the reaction UDP-N-acetyl-alpha-D-muramate + L-alanine + ATP = UDP-N-acetyl-alpha-D-muramoyl-L-alanine + ADP + phosphate + H(+). Its pathway is cell wall biogenesis; peptidoglycan biosynthesis. Functionally, cell wall formation. This chain is UDP-N-acetylmuramate--L-alanine ligase, found in Shewanella loihica (strain ATCC BAA-1088 / PV-4).